The sequence spans 708 residues: Prolyl 3-hydroxylase 2 (708 aa).

A signal peptide spans 1–24; it reads MRERIWAPPLLLLLPLLLPPPLWG. 4 TPR repeats span residues 44–77, 148–181, 210–243, and 306–339; these read FDLL…HRRL, RVPY…NPEH, HMES…YFVE, and PLHY…HPDD. Asn-449 and Asn-549 each carry an N-linked (GlcNAc...) asparagine glycan. Positions 557–671 constitute a Fe2OG dioxygenase domain; the sequence is THMVCRTALS…RCAVALWFTL (115 aa). The Fe cation site is built by His-580, Asp-582, and His-652. The active site involves Arg-662. Positions 705-708 match the Prevents secretion from ER motif; that stretch reads KDEL.

Belongs to the leprecan family. Fe cation is required as a cofactor. Requires L-ascorbate as cofactor. Expression localized to the epithelia of bile ducts and to the sacroplasm of heart muscle and skeletal muscle. In the pancreas, localized to a subpopulation of Langerhans islet cells and in the salivary gland, expressed in acinar cells (at protein level). Expressed in adult heart, placenta, lung, liver, skeletal muscle and kidney. Detected in fetal heart, spleen, lung, liver skeletal muscle and kidney.

Its subcellular location is the endoplasmic reticulum. The protein resides in the sarcoplasmic reticulum. It localises to the golgi apparatus. The catalysed reaction is L-prolyl-[collagen] + 2-oxoglutarate + O2 = trans-3-hydroxy-L-prolyl-[collagen] + succinate + CO2. Its activity is regulated as follows. Inhibited by pyridine 2,4-dicarboxylate, an analog of 2-oxoglutarate. In terms of biological role, prolyl 3-hydroxylase that catalyzes the post-translational formation of 3-hydroxyproline on collagens. Contributes to proline 3-hydroxylation of collagen COL4A1 and COL1A1 in tendons, the eye sclera and in the eye lens capsule. Has high activity with the type IV collagen COL4A1, and lower activity with COL1A1. Catalyzes hydroxylation of the first Pro in Gly-Pro-Hyp sequences where Hyp is 4-hydroxyproline. Has no activity on substrates that lack 4-hydroxyproline in the third position. The chain is Prolyl 3-hydroxylase 2 from Homo sapiens (Human).